Reading from the N-terminus, the 512-residue chain is uncharacterized protein (512 aa).

The N-terminal stretch at 1-22 (MVSSLIYSLCAVSGLLATTVNG) is a signal peptide. Asn167 carries N-linked (GlcNAc...) asparagine glycosylation. Residues 251-282 (SAASPPIYEPDRQTDPEDPETGRNNNQGFEGL) are disordered.

It localises to the secreted. This is an uncharacterized protein from Arthroderma benhamiae (strain ATCC MYA-4681 / CBS 112371) (Trichophyton mentagrophytes).